The chain runs to 748 residues: Glucans biosynthesis glucosyltransferase H (748 aa).

A run of 7 helical transmembrane segments spans residues 85–107, 127–149, 443–465, 494–516, 529–551, 587–606, and 608–630; these read LIVR…GYGM, FLVL…FVLL, GIGS…LISL, AWVF…LVLI, GRVL…CMMI, LAGP…SVSL, and LLLW…IMTS.

It belongs to the glycosyltransferase 2 family. OpgH subfamily.

It is found in the cell inner membrane. It participates in glycan metabolism; osmoregulated periplasmic glucan (OPG) biosynthesis. In terms of biological role, involved in the biosynthesis of osmoregulated periplasmic glucans (OPGs). In Bradyrhizobium diazoefficiens (strain JCM 10833 / BCRC 13528 / IAM 13628 / NBRC 14792 / USDA 110), this protein is Glucans biosynthesis glucosyltransferase H.